Reading from the N-terminus, the 252-residue chain is Hydroxyacylglutathione hydrolase (252 aa).

7 residues coordinate Zn(2+): His54, His56, Asp58, His59, His111, Asp128, and His166.

The protein belongs to the metallo-beta-lactamase superfamily. Glyoxalase II family. In terms of assembly, monomer. The cofactor is Zn(2+).

The catalysed reaction is an S-(2-hydroxyacyl)glutathione + H2O = a 2-hydroxy carboxylate + glutathione + H(+). Its pathway is secondary metabolite metabolism; methylglyoxal degradation; (R)-lactate from methylglyoxal: step 2/2. Its function is as follows. Thiolesterase that catalyzes the hydrolysis of S-D-lactoyl-glutathione to form glutathione and D-lactic acid. This is Hydroxyacylglutathione hydrolase from Aliivibrio fischeri (strain ATCC 700601 / ES114) (Vibrio fischeri).